Consider the following 95-residue polypeptide: Small ribosomal subunit protein uS17 (95 aa).

Belongs to the universal ribosomal protein uS17 family. Part of the 30S ribosomal subunit.

One of the primary rRNA binding proteins, it binds specifically to the 5'-end of 16S ribosomal RNA. The chain is Small ribosomal subunit protein uS17 from Mycoplasmopsis synoviae (strain 53) (Mycoplasma synoviae).